The sequence spans 184 residues: Major urinary protein 3 (184 aa).

An N-terminal signal peptide occupies residues 1–22 (MKLLLPLLLLLCLELTLVCIHA). N-linked (GlcNAc...) asparagine glycosylation is present at asparagine 66. Residues cysteine 86 and cysteine 179 are joined by a disulfide bond.

This sequence belongs to the calycin superfamily. Lipocalin family. In terms of processing, glycosylated. In terms of tissue distribution, abundant in the urine of adult male mice but absent from that of females.

It localises to the secreted. In terms of biological role, binds pheromones that are released from drying urine of males. These pheromones affect the sexual behavior of females. This chain is Major urinary protein 3 (Mup3), found in Mus musculus (Mouse).